The sequence spans 184 residues: GTP-binding protein Rheb (184 aa).

Lys-8 participates in a covalent cross-link: Glycyl lysine isopeptide (Lys-Gly) (interchain with G-Cter in ubiquitin). GDP contacts are provided by Ser-16, Val-17, Gly-18, Lys-19, Ser-20, Ser-21, Val-32, and Asp-33. Ser-16, Val-17, Gly-18, Lys-19, Ser-20, Ser-21, Val-32, Asp-33, Tyr-35, Pro-37, Thr-38, Gly-63, Asn-119, Lys-120, and Asp-122 together coordinate GTP. Position 20 (Ser-20) interacts with Mg(2+). The Effector region motif lies at 35 to 43 (YDPTIENTF). Position 38 (Thr-38) interacts with Mg(2+). Residue Asn-119 coordinates GDP. Asp-122 serves as a coordination point for GDP. Ser-130 bears the Phosphoserine; by MAPKAPK5 mark. Ala-150 is a GDP binding site. Ala-150 is a binding site for GTP. Cys-181 carries the post-translational modification Cysteine methyl ester. Residue Cys-181 is the site of S-farnesyl cysteine attachment. A propeptide spans 182-184 (SVM) (removed in mature form).

The protein belongs to the small GTPase superfamily. Rheb family. As to quaternary structure, associates with the mTORC1 complex (MTOR, MLST8 and RPTOR) in a guanyl nucleotide-independent manner. Interacts with TSC2. Interacts with MCRS1; the interaction maintains RHEB at the lysosome in its active GTP-bound form and prevents its interaction with the mTORC1 complex inhibitor TSC2, ensuring activation of the mTORC1 complex by RHEB. Interacts (when prenylated) with PDE6D; this promotes release from membranes. In terms of processing, farnesylation is important for efficiently activating mTORC1-mediated signaling. Post-translationally, polyubiquitinated in response to amino acid, promoting its interaction with MTOR and mTORC1 activation. Deubiquitination by ATXN3 promotes recruitment of the TSC-TBC complex and RHEB inactivation by TSC2. Monoubiquitinated at Lys-8 by RNF152, promoting its association with the TSC-TBC complex. Deubiquitinated at Lys-8 by USP4, promoting mTORC1 activation. Phosphorylation by MAPKAPK5 impairs GTP-binding and inactivation.

The protein localises to the endomembrane system. It localises to the lysosome membrane. The protein resides in the golgi apparatus membrane. Its subcellular location is the endoplasmic reticulum membrane. It is found in the cytoplasm. The protein localises to the cytosol. The catalysed reaction is GTP + H2O = GDP + phosphate + H(+). With respect to regulation, alternates between an inactive form bound to GDP and an active form bound to GTP. Inactivated by the TSC-TBC complex via the GTPase activating protein (GAP) domain of TSC2. Autoinhibited by Tyr-35, which constrains the active site conformation, restricting the access of the catalytic Asp-65 to the nucleotide-binding pocket. In terms of biological role, small GTPase that acts as an allosteric activator of the canonical mTORC1 complex, an evolutionarily conserved central nutrient sensor that stimulates anabolic reactions and macromolecule biosynthesis to promote cellular biomass generation and growth. In response to nutrients, growth factors or amino acids, specifically activates the protein kinase activity of MTOR, the catalytic component of the mTORC1 complex: acts by causing a conformational change that allows the alignment of residues in the active site of MTOR, thereby enhancing the phosphorylation of ribosomal protein S6 kinase (RPS6KB1 and RPS6KB2) and EIF4EBP1 (4E-BP1). RHEB is also required for localization of the TSC-TBC complex to lysosomal membranes. In response to starvation, RHEB is inactivated by the TSC-TBC complex, preventing activation of mTORC1. Has low intrinsic GTPase activity. The sequence is that of GTP-binding protein Rheb from Mus musculus (Mouse).